Reading from the N-terminus, the 366-residue chain is Subtilisin-like protease het-Q2 (366 aa).

A Peptidase S8 domain is found at 1 to 321 (MSAISHHSLS…RVLMALGEKT (321 aa)). Residue aspartate 35 is the Charge relay system of the active site. A disordered region spans residues 79 to 98 (DFCQPSPPGDRQGPPPQPHS). Pro residues predominate over residues 83-96 (PSPPGDRQGPPPQP). Active-site charge relay system residues include histidine 105 and serine 266. Residues 261–283 (LVSGSSFATPVVVSVAALVLAFV) traverse the membrane as a helical segment.

This sequence belongs to the peptidase S8 family.

It localises to the membrane. In terms of biological role, serine protease involved in heterokaryon incompatibility, a process that ensures that during spontaneous vegetative cell fusion, only compatible cells from the same colony survive (non-self-recognition). In P.anserina, the het-q locus exists as 2 incompatible alleles, het-Q1 (AC B2AXJ5) and het-Q2 (this entry). Prevents cell fusion with strains containing the gasdermin-like protein het-Q1 by mediating proteolytic cleavage and maturation of het-Q1 during the allorecognition process, thereby triggering cell death. The polypeptide is Subtilisin-like protease het-Q2 (Podospora anserina (Pleurage anserina)).